A 740-amino-acid chain; its full sequence is Pheromone-regulated membrane protein 10 (740 aa).

Disordered stretches follow at residues 1–48, 65–97, and 241–269; these read MGKN…RSGL, FADE…KEEC, and NQPG…PTGE. The span at 7–18 shows a compositional bias: basic and acidic residues; it reads QAAEGEEARRGS. Over residues 19-33 the composition is skewed to low complexity; that stretch reads ESSGSSAEPSGAVAE. Acidic residues predominate over residues 67 to 76; it reads DEDEVVEQDE. The segment covering 256–267 has biased composition (polar residues); sequence SAQTLSSETLPT. 10 helical membrane-spanning segments follow: residues 422–442, 445–465, 475–495, 499–519, 541–561, 574–594, 599–619, 622–642, 651–671, and 707–727; these read AWMC…FAFG, WINL…QFIV, VFEI…GSIP, ICFG…YIIL, IIYS…FGWI, ELSP…LSLI, WSQI…TYWS, HFTA…GIMG, GLAM…GIAS, and ITMI…TLVV.

Belongs to the ThrE exporter (TC 2.A.79) family.

It is found in the membrane. The chain is Pheromone-regulated membrane protein 10 from Eremothecium gossypii (strain ATCC 10895 / CBS 109.51 / FGSC 9923 / NRRL Y-1056) (Yeast).